The chain runs to 189 residues: Large ribosomal subunit protein eL18 (189 aa).

This sequence belongs to the eukaryotic ribosomal protein eL18 family.

Its subcellular location is the cytoplasm. This is Large ribosomal subunit protein eL18 (RpL18) from Anopheles gambiae (African malaria mosquito).